Consider the following 181-residue polypeptide: Oligoribonuclease (181 aa).

The Exonuclease domain occupies 8–171; sequence LIWVDLEMTG…DDIRESIAEL (164 aa). Residue Y129 is part of the active site.

It belongs to the oligoribonuclease family.

It is found in the cytoplasm. 3'-to-5' exoribonuclease specific for small oligoribonucleotides. In Vibrio campbellii (strain ATCC BAA-1116), this protein is Oligoribonuclease.